The chain runs to 274 residues: Rhamnulose-1-phosphate aldolase (274 aa).

Residue glutamate 117 is part of the active site. Zn(2+) contacts are provided by histidine 141, histidine 143, and histidine 212.

This sequence belongs to the aldolase class II family. RhaD subfamily. As to quaternary structure, homotetramer. Zn(2+) is required as a cofactor.

It is found in the cytoplasm. It catalyses the reaction L-rhamnulose 1-phosphate = (S)-lactaldehyde + dihydroxyacetone phosphate. It participates in carbohydrate degradation; L-rhamnose degradation; glycerone phosphate from L-rhamnose: step 3/3. Its function is as follows. Catalyzes the reversible cleavage of L-rhamnulose-1-phosphate to dihydroxyacetone phosphate (DHAP) and L-lactaldehyde. This chain is Rhamnulose-1-phosphate aldolase, found in Escherichia coli O157:H7.